Consider the following 291-residue polypeptide: ATP phosphoribosyltransferase (291 aa).

It belongs to the ATP phosphoribosyltransferase family. Long subfamily. Requires Mg(2+) as cofactor.

It localises to the cytoplasm. It catalyses the reaction 1-(5-phospho-beta-D-ribosyl)-ATP + diphosphate = 5-phospho-alpha-D-ribose 1-diphosphate + ATP. The protein operates within amino-acid biosynthesis; L-histidine biosynthesis; L-histidine from 5-phospho-alpha-D-ribose 1-diphosphate: step 1/9. Its activity is regulated as follows. Feedback inhibited by histidine. Functionally, catalyzes the condensation of ATP and 5-phosphoribose 1-diphosphate to form N'-(5'-phosphoribosyl)-ATP (PR-ATP). Has a crucial role in the pathway because the rate of histidine biosynthesis seems to be controlled primarily by regulation of HisG enzymatic activity. The protein is ATP phosphoribosyltransferase of Geotalea uraniireducens (strain Rf4) (Geobacter uraniireducens).